Consider the following 134-residue polypeptide: Cytochrome b5 (134 aa).

The residue at position 2 (alanine 2) is an N-acetylalanine. An N6-acetyllysine mark is found at lysine 7, lysine 10, and lysine 19. The Cytochrome b5 heme-binding domain maps to 9–85; that stretch reads VKYYTLEEIK…SKTFIIGELH (77 aa). The heme site is built by histidine 44 and histidine 68. The chain crosses the membrane as a helical span at residues 109 to 131; it reads WWTNWVIPAISALIVALMYRLYM.

It belongs to the cytochrome b5 family.

The protein resides in the endoplasmic reticulum membrane. It localises to the microsome membrane. Its function is as follows. Cytochrome b5 is a membrane-bound hemoprotein functioning as an electron carrier for several membrane-bound oxygenases. The protein is Cytochrome b5 (CYB5A) of Oryctolagus cuniculus (Rabbit).